The chain runs to 1127 residues: Disease resistance protein RPS6 (1127 aa).

At Met1 the chain carries N-acetylmethionine. The region spanning 12 to 176 is the TIR domain; it reads WSYHVFPSFS…EIANDILGKM (165 aa). Glu87 is an active-site residue. LRR repeat units follow at residues 197-221, 540-563, 587-609, 610-632, 633-656, 658-679, 680-704, 766-790, 791-813, 814-834, and 835-857; these read MSSLLHLESEEVRMVGIWGPSGIGK, IDETDELHIHESSFKGMHNLLFLK, PSRLRLLRFDRYPSKCLPSNFHP, ENLVKLQMQQSKLEKLWDGVHSL, AGLRNMDLRGSRNLKEIPDLSMAT, LETLKLSSCSSLVELPSSIQYL, NKLNDLDMSYCDHLETIPSGVNLKS, SPTLTRLTFSNNPSFVEVPSSIQNL, YQLEHLEIMNCRNLVTLPTGINL, DSLISLDLSHCSQLKTFPDIS, and TNISDLNLSYTAIEEVPLSIEKL.

As to quaternary structure, interacts with EDS1. Ubiquitous.

It catalyses the reaction NAD(+) + H2O = ADP-D-ribose + nicotinamide + H(+). Functionally, disease resistance (R) protein that specifically recognizes the hopA1 type III effector avirulence protein from Pseudomonas syringae. Resistance proteins guard the plant against pathogens that contain an appropriate avirulence protein via an indirect interaction with this avirulence protein. That triggers a defense system including the hypersensitive response, which restricts the pathogen growth. In Arabidopsis thaliana (Mouse-ear cress), this protein is Disease resistance protein RPS6.